We begin with the raw amino-acid sequence, 287 residues long: Probable prolyl 4-hydroxylase 3 (287 aa).

The Cytoplasmic segment spans residues 1–16; sequence MAKLRHSRFQARKWST. Residues 17-37 form a helical; Signal-anchor for type II membrane protein membrane-spanning segment; the sequence is LMLVLFMLFMLTIVLLMLLAF. Over 38–287 the chain is Lumenal; sequence GVFSLPINND…KWMHVGEYKI (250 aa). The Fe2OG dioxygenase domain maps to 159 to 282; sequence HGEGLQVLHY…KWSSTKWMHV (124 aa). 2 residues coordinate Fe cation: His177 and Asp179. The N-linked (GlcNAc...) asparagine glycan is linked to Asn218. His263 contacts Fe cation. A 2-oxoglutarate-binding site is contributed by Lys273.

It belongs to the P4HA family. It depends on Fe(2+) as a cofactor. L-ascorbate serves as cofactor.

It localises to the endoplasmic reticulum membrane. The enzyme catalyses L-prolyl-[collagen] + 2-oxoglutarate + O2 = trans-4-hydroxy-L-prolyl-[collagen] + succinate + CO2. In terms of biological role, catalyzes the post-translational formation of 4-hydroxyproline in -Xaa-Pro-Gly- sequences in proline-rich peptide sequences of plant glycoproteins and other proteins. Hydroxyprolines are important constituent of many plant cell wall glycoproteins such as extensins, hydroxyproline-rich glycoproteins, lectins and arabinogalactan proteins. This is Probable prolyl 4-hydroxylase 3 from Arabidopsis thaliana (Mouse-ear cress).